Consider the following 476-residue polypeptide: Chromosomal replication initiator protein DnaA (476 aa).

Residues 1-73 are domain I, interacts with DnaA modulators; it reads MTNSEQERWS…LSAWQAEMPE (73 aa). Residues 73–132 form a domain II region; it reads EVHRIDLSVRTAMRCATPAKEAPAAVEARRPERSDAKPVSDARAPVMTPVAASHDALGGS. Residues 92–115 form a disordered region; the sequence is KEAPAAVEARRPERSDAKPVSDAR. Residues 99–112 are compositionally biased toward basic and acidic residues; sequence EARRPERSDAKPVS. The tract at residues 133–355 is domain III, AAA+ region; it reads PLDPRLTFAS…GAINRLLAHS (223 aa). 4 residues coordinate ATP: G180, G182, K183, and T184. Positions 356-476 are domain IV, binds dsDNA; sequence KLNNQPVTLD…VESLKRQLQD (121 aa).

This sequence belongs to the DnaA family. In terms of assembly, oligomerizes as a right-handed, spiral filament on DNA at oriC.

The protein resides in the cytoplasm. Functionally, plays an essential role in the initiation and regulation of chromosomal replication. ATP-DnaA binds to the origin of replication (oriC) to initiate formation of the DNA replication initiation complex once per cell cycle. Binds the DnaA box (a 9 base pair repeat at the origin) and separates the double-stranded (ds)DNA. Forms a right-handed helical filament on oriC DNA; dsDNA binds to the exterior of the filament while single-stranded (ss)DNA is stabiized in the filament's interior. The ATP-DnaA-oriC complex binds and stabilizes one strand of the AT-rich DNA unwinding element (DUE), permitting loading of DNA polymerase. After initiation quickly degrades to an ADP-DnaA complex that is not apt for DNA replication. Binds acidic phospholipids. This is Chromosomal replication initiator protein DnaA from Bradyrhizobium sp. (strain ORS 278).